Consider the following 469-residue polypeptide: ABHD16B (469 aa).

The AB hydrolase-1 domain occupies 174–298; sequence VICCEGNAGF…GLVVRTVREH (125 aa). Residues S247, D322, and H418 each act as charge relay system in the active site.

Belongs to the AB hydrolase superfamily. ABHD16 family.

The enzyme catalyses a 1,2-diacyl-sn-glycero-3-phospho-L-serine + H2O = a 2-acyl-sn-glycero-3-phospho-L-serine + a fatty acid + H(+). It carries out the reaction a 1-acylglycerol + H2O = glycerol + a fatty acid + H(+). It catalyses the reaction 1-(9Z-octadecenoyl)-glycerol + H2O = glycerol + (9Z)-octadecenoate + H(+). Functionally, hydrolyzes the sn-1 position of glycerophospholipids with high specificity towards phosphatidylserine (PS), PS-PLA1 enzyme. Also hydrolyzes the acyl chain of glycerolipids with a preference for the monoacylglycerol (MAG) 1-acylglycerol, MAG lipase. Plays a regulatory role in cellular lipid homeostasis by modulating genes involved in neutral lipid degradation and in phospholipid synthesis and composition. The protein is ABHD16B of Homo sapiens (Human).